The sequence spans 722 residues: Tudor domain-containing protein 3 (722 aa).

The UBA domain maps to 264-304; it reads LVDEKALRHITEMGFSKEASRQALMDNGNNLEAALNVLLNS. 3 disordered regions span residues 305-342, 355-453, and 470-526; these read NKQK…SAPS, LSVE…RSYS, and SDTV…HFYD. Serine 327 bears the Phosphoserine mark. Over residues 362–388 the composition is skewed to polar residues; sequence SQPQQLHQGQNRVSNTEQNGVKDNNQP. 2 stretches are compositionally biased toward basic and acidic residues: residues 392–409 and 442–453; these read PRND…RFQR and AEERTKCDRSYS. Lysine 541 is covalently cross-linked (Glycyl lysine isopeptide (Lys-Gly) (interchain with G-Cter in SUMO2)). One can recognise a Tudor domain in the interval 626–686; it reads LWKSGDECLA…RPIQSEAWEE (61 aa). Basic and acidic residues predominate over residues 695-704; the sequence is EFRRGGDGQP. Positions 695-722 are disordered; that stretch reads EFRRGGDGQPRRSTRPTQQFYQPPRARN. The EBM motif; may mediate interaction with the EJC stretch occupies residues 702-722; that stretch reads GQPRRSTRPTQQFYQPPRARN.

In terms of assembly, component of mRNA stress granules. Interacts with FMR1, FXR1, FXR2, EWSR1, FUS, SERBP1, EEF1A1 and DDX3X or DDX3Y, and with the small nuclear ribonucleoprotein-associated proteins SNRPB and SNRPN. Interacts with 'Lys-48'-linked tetra-ubiquitin, but not with monoubiquitin or 'Lys-63'-linked ubiquitin chains. May interact with the exon junction complex (EJC) composed at least of CASC3, EIF4A3, MAGOH and RBM8A. Interacts with POLR2A (via the C-terminal domain (CTD)).

Its subcellular location is the cytoplasm. It is found in the nucleus. Scaffolding protein that specifically recognizes and binds dimethylarginine-containing proteins. Plays a role in the regulation of translation of target mRNAs by binding Arg/Gly-rich motifs (GAR) in dimethylarginine-containing proteins. In nucleus, acts as a coactivator: recognizes and binds asymmetric dimethylation on the core histone tails associated with transcriptional activation (H3R17me2a and H4R3me2a) and recruits proteins at these arginine-methylated loci. In cytoplasm, acts as an antiviral factor that participates in the assembly of stress granules together with G3BP1. This is Tudor domain-containing protein 3 (TDRD3) from Bos taurus (Bovine).